A 1196-amino-acid chain; its full sequence is Jouberin (1196 aa).

A coiled-coil region spans residues 13-45 (KVRFEELLKTHSDLMREKKKLKKKLVRSEENIS). Ser45 carries the phosphoserine modification. Disordered stretches follow at residues 56–186 (MKET…EEDE), 215–242 (QLTY…KEVP), and 254–327 (ISGD…HEIT). A compositionally biased stretch (polar residues) spans 80–91 (DDVSAANTNNLK). A compositionally biased stretch (basic residues) spans 92-101 (KSTRVTKNKL). Positions 102-113 (RNTQLATENPNG) are enriched in polar residues. 3 stretches are compositionally biased toward basic and acidic residues: residues 141–154 (LKPE…DSTH), 166–179 (DHQK…GREE), and 224–233 (LFHDDKLSSE). The tract at residues 141 to 434 (LKPETPENKV…VFNENFPYLL (294 aa)) is interaction with HAP1. The segment covering 300–309 (KPKKTKKKTK) has biased composition (basic residues). 7 WD repeats span residues 607 to 649 (AGER…FMRE), 652 to 691 (GHLN…TNTF), 695 to 735 (PHPS…DSAI), 742 to 781 (VHKS…NDLE), 797 to 837 (EFKG…ARKF), 841 to 880 (ANYR…QVAM), and 885 to 926 (PFKS…AQQE). Ser1002 is modified (phosphoserine). In terms of domain architecture, SH3 spans 1051–1111 (DTAPTVVALY…PANHVASETL (61 aa)). Positions 1115 to 1196 (LPPEIKERSP…QAGRKVTLIE (82 aa)) are disordered. 2 stretches are compositionally biased toward basic and acidic residues: residues 1117-1136 (PEIK…KIEK) and 1161-1182 (THSE…DTRM). A Phosphoserine modification is found at Ser1123.

In terms of assembly, self-associates. Part of the tectonic-like complex (also named B9 complex). Interacts with MKS1. Interacts with NPHP1; probably as heterodimers and/or AHI1(2):NPHP1(2) heterotetramers. Interacts (via SH3 domain) with the dynamin GTPase DNM2. Interacts with HAP1; probably as AHI1(2):HAP1(2) heterotetramers. Interacts with RAB8A. Interacts with CEND1. Interacts with CTNNB1/beta-catenin. Interacts with SPATA7. In terms of tissue distribution, highly expressed in the most primitive normal hematopoietic cells. Expressed in brain, particularly in neurons that give rise to the crossing axons of the corticospinal tract and superior cerebellar peduncles. Expressed in kidney (renal collecting duct cells) (at protein level).

It is found in the cytoplasm. It localises to the cytoskeleton. Its subcellular location is the cilium basal body. The protein localises to the cell junction. The protein resides in the adherens junction. It is found in the microtubule organizing center. It localises to the centrosome. Its subcellular location is the centriole. In terms of biological role, involved in vesicle trafficking and required for ciliogenesis, formation of primary non-motile cilium, and recruitment of RAB8A to the basal body of primary cilium. Component of the tectonic-like complex, a complex localized at the transition zone of primary cilia and acting as a barrier that prevents diffusion of transmembrane proteins between the cilia and plasma membranes. Involved in neuronal differentiation. As a positive modulator of classical Wnt signaling, may play a crucial role in ciliary signaling during cerebellum embryonic development. This chain is Jouberin (AHI1), found in Homo sapiens (Human).